Here is a 679-residue protein sequence, read N- to C-terminus: MNRIFRNTIFYLLIFLVIVGIVSVFNSDQTETENVSFNEFAERLENGQVQELSVKPERQVYLVRGQFNDQAEDEFFQTYALRSEQTAELLFNAEDPTGTPFNLEIEPADETSGWVQFFTGIIPFIIIFILFFFLLSQAQGGGSRVMNFGKSKAKMVNEDKKKAKFKDVAGADEEKQELVEVVEFLKDPRKFSAIGARIPKGVLLVGPPGTGKTLLARAVAGEAGVPFFSISGSDFVEMFVGVGASRVRDLFENAKKNAPCIIFIDEIDAVGRQRGAGLGGGHDEREQTLNQLLVEMDGFSANEGIIIIAATNRADILDPALLRPGRFDRQIQVNRPDVNGREEVLKVHARNKPLNDDVNLKTIATRTPGFSGADLENLLNEAALVAARHDHTKISMIHIEEAIDRVIAGPAKKSRVISPKEKKIVAWHEAGHTVVGVKLENADMVHKVTIVPRGMAGGYAVMLPKEDRYFMTQPELLDKIIGLLGGRVAEEVTFGEVSTGAHNDFQRATGIARKMVTEYGMSEKLGPMQFISGSGGQVFLGRDIQNEQNYSDAIAHEIDLEVQRIIKECYARCKQILLENKDSLDLVAKTLLDMETLDAEQIKSLVHEGKLPDDHHLNAHLEKEKASESDVKVNINSKKEETPQVEAEQPQEPNTDEPIEKDPSVEDNRSFEDDTNKKE.

Residues 1–6 (MNRIFR) are Cytoplasmic-facing. The chain crosses the membrane as a helical span at residues 7–27 (NTIFYLLIFLVIVGIVSVFNS). Residues 28 to 114 (DQTETENVSF…IEPADETSGW (87 aa)) are Extracellular-facing. A helical membrane pass occupies residues 115-135 (VQFFTGIIPFIIIFILFFFLL). Over 136 to 679 (SQAQGGGSRV…SFEDDTNKKE (544 aa)) the chain is Cytoplasmic. Residue 206 to 213 (GPPGTGKT) participates in ATP binding. H428 lines the Zn(2+) pocket. E429 is an active-site residue. Residues H432 and D504 each coordinate Zn(2+). 2 stretches are compositionally biased toward basic and acidic residues: residues 621-642 (LEKEKASESDVKVNINSKKEET) and 658-679 (PIEKDPSVEDNRSFEDDTNKKE). The segment at 621-679 (LEKEKASESDVKVNINSKKEETPQVEAEQPQEPNTDEPIEKDPSVEDNRSFEDDTNKKE) is disordered.

The protein in the central section; belongs to the AAA ATPase family. It in the C-terminal section; belongs to the peptidase M41 family. In terms of assembly, homohexamer. Requires Zn(2+) as cofactor.

Its subcellular location is the cell membrane. Functionally, acts as a processive, ATP-dependent zinc metallopeptidase for both cytoplasmic and membrane proteins. Plays a role in the quality control of integral membrane proteins. In Alkalihalophilus pseudofirmus (strain ATCC BAA-2126 / JCM 17055 / OF4) (Bacillus pseudofirmus), this protein is ATP-dependent zinc metalloprotease FtsH.